A 472-amino-acid chain; its full sequence is Eukaryotic translation initiation factor 2 subunit 3 (472 aa).

Position 2 is an N-acetylalanine (Ala2). A Phosphoserine modification is found at Ser16. Residues 39–248 (QATINIGTIG…IVKKIPVPPR (210 aa)) form the tr-type G domain. The interval 48-55 (GHVAHGKS) is G1. 51–56 (AHGKST) contacts GTP. Positions 76–80 (NITIK) are G2. Residues 134-137 (DCPG) are G3. GTP contacts are provided by residues 190-193 (NKID) and 225-227 (SAQ). A G4 region spans residues 190–193 (NKID). Residues 225 to 227 (SAQ) form a G5 region. The tract at residues 457 to 469 (GQIRRGVTIKPTV) is interacts with CDC123.

The protein belongs to the TRAFAC class translation factor GTPase superfamily. Classic translation factor GTPase family. EIF2G subfamily. As to quaternary structure, eukaryotic translation initiation factor 2 eIF2 is a heterotrimeric complex composed of an alpha (EIF2S1), a beta (EIF2S2) and a gamma (EIF2S3) chain. eIF2 is member of the 43S pre-initiation complex (43S PIC). Interacts (via C-terminus) with CDC123; the interaction is direct.

Its subcellular location is the cytoplasm. It localises to the cytosol. It carries out the reaction GTP + H2O = GDP + phosphate + H(+). Functionally, member of the eIF2 complex that functions in the early steps of protein synthesis by forming a ternary complex with GTP and initiator tRNA. This complex binds to a 40S ribosomal subunit, followed by mRNA binding to form the 43S pre-initiation complex (43S PIC). Junction of the 60S ribosomal subunit to form the 80S initiation complex is preceded by hydrolysis of the GTP bound to eIF2 and release of an eIF2-GDP binary complex. In order for eIF2 to recycle and catalyze another round of initiation, the GDP bound to eIF2 must exchange with GTP by way of a reaction catalyzed by eIF-2B. This Pongo abelii (Sumatran orangutan) protein is Eukaryotic translation initiation factor 2 subunit 3 (EIF2S3).